We begin with the raw amino-acid sequence, 352 residues long: N-acetyl-gamma-glutamyl-phosphate reductase (352 aa).

Cys-155 is a catalytic residue.

This sequence belongs to the NAGSA dehydrogenase family. Type 1 subfamily.

It is found in the cytoplasm. The enzyme catalyses N-acetyl-L-glutamate 5-semialdehyde + phosphate + NADP(+) = N-acetyl-L-glutamyl 5-phosphate + NADPH + H(+). It functions in the pathway amino-acid biosynthesis; L-arginine biosynthesis; N(2)-acetyl-L-ornithine from L-glutamate: step 3/4. Catalyzes the NADPH-dependent reduction of N-acetyl-5-glutamyl phosphate to yield N-acetyl-L-glutamate 5-semialdehyde. The protein is N-acetyl-gamma-glutamyl-phosphate reductase of Picosynechococcus sp. (strain ATCC 27264 / PCC 7002 / PR-6) (Agmenellum quadruplicatum).